Consider the following 491-residue polypeptide: MSETKRVRVRYAPSPTGFLHIGNARTALFNYLFARHNDGDFIIRIEDTDAKRNVADGEESQMKNLKWLGMDWDEGVDVPGKYGPYRQSERQSIYEPLIQQLLDKGLAYKCYCTEEELEAEREKQKANGEMPRYSGKCRHLTKEQQAEKEAQGFKPSIRFKVPANETITFNDMVKDDVSFESNGIGDFVIAKKDGIPTYNFAVAVDDHLMEISHVLRGDDHISNTPKQILIYNAFGWEPPIFGHMTLIVNESRRKLSKRDGSIIQFIEQYRDLGYLPEALFNFIAMLGWSPEGEEEIFSKEEFIKMFDPKRLSKSPALFDNVKLTWVNNQYVKKLPLNDVVELSLPHLQKAGVVSADLDQAELDWVHKLVSLYHEQMSYGAEIVPLSEMFFADAESITFDEEEKAVLAEETVPKVISAFKKELEALDVLEAAEVKSAIKRVQKETGVKGKGLFMPIRIVTTGEMHGPELPLAIEVLGLEKVLNRLDTWLQNN.

The short motif at 13–23 (PSPTGFLHIGN) is the 'HIGH' region element. 4 residues coordinate Zn(2+): C110, C112, C137, and H139. The 'KMSKS' region signature appears at 254–258 (KLSKR). An ATP-binding site is contributed by K257.

Belongs to the class-I aminoacyl-tRNA synthetase family. Glutamate--tRNA ligase type 1 subfamily. Monomer. It depends on Zn(2+) as a cofactor.

It localises to the cytoplasm. It catalyses the reaction tRNA(Glu) + L-glutamate + ATP = L-glutamyl-tRNA(Glu) + AMP + diphosphate. Catalyzes the attachment of glutamate to tRNA(Glu) in a two-step reaction: glutamate is first activated by ATP to form Glu-AMP and then transferred to the acceptor end of tRNA(Glu). This is Glutamate--tRNA ligase from Listeria innocua serovar 6a (strain ATCC BAA-680 / CLIP 11262).